A 451-amino-acid chain; its full sequence is Tubulin gamma-2 chain (451 aa).

Position 131 is a phosphoserine; by BRSK1 (Ser-131). 142–148 lines the GTP pocket; the sequence is AGGTGSG.

It belongs to the tubulin family. As to quaternary structure, component of the gamma-tubulin ring complex (gTuRC) consisting of TUBGCP2, TUBGCP3, TUBGCP4, TUBGCP5 and TUBGCP6 and gamma-tubulin TUBG1 or TUBG2. TUBGCP2, TUBGCP3, TUBGCP4, TUBGCP5 and TUBGCP6 assemble in a 5:5:2:1:1 stoichiometry; each is associated with a gamma-tubulin, thereby arranging 14 gamma-tubulins in a helical manner. Gamma-tubulin at the first position is blocked by TUBGCP3 at the last position, allowing 13 protafilaments to grow into a microtubule. Interacts with alpha-beta tubulin heterodimers; the interaction allows microtubules to nucleate from the gTuRC. In terms of processing, phosphorylation at Ser-131 by BRSK1 regulates centrosome duplication, possibly by mediating relocation of gamma-tubulin and its associated proteins from the cytoplasm to the centrosome.

The protein resides in the cytoplasm. The protein localises to the cytoskeleton. It localises to the microtubule organizing center. Its subcellular location is the centrosome. Its function is as follows. Tubulin is the major constituent of microtubules, protein filaments consisting of alpha- and beta-tubulin heterodimers. Gamma-tubulin is a key component of the gamma-tubulin ring complex (gTuRC) which mediates microtubule nucleation. The gTuRC regulates the minus-end nucleation of alpha-beta tubulin heterodimers that grow into microtubule protafilaments, a critical step in centrosome duplication and spindle formation. This chain is Tubulin gamma-2 chain (TUBG2), found in Bos taurus (Bovine).